The primary structure comprises 121 residues: Protein FAM241B (121 aa).

Positions 12–58 are disordered; it reads QDDDPRVRTTTQPPRGSIPRQSFFNRGHGAPPGGPGPRQQQAGARLG. The span at 19–35 shows a compositional bias: polar residues; the sequence is RTTTQPPRGSIPRQSFF. Ser33 is modified (phosphoserine). The span at 48–58 shows a compositional bias: low complexity; the sequence is PRQQQAGARLG. Phosphoserine is present on Ser62. A helical transmembrane segment spans residues 92 to 112; it reads ILLLFLLMMLGVRGLLLVGLV.

This sequence belongs to the FAM241 family.

The protein resides in the membrane. Its function is as follows. May play a role in lysosome homeostasis. In Homo sapiens (Human), this protein is Protein FAM241B.